The chain runs to 663 residues: Rho GTPase-activating protein 18 (663 aa).

2 disordered regions span residues 14-73 (AYHP…DESM) and 85-106 (RSNE…DEGE). A compositionally biased stretch (basic and acidic residues) spans 27 to 37 (SHVKGGDEATS). The segment covering 38–51 (SRRYGQYTINQEGS) has biased composition (polar residues). Phosphoserine is present on residues Ser-65 and Ser-68. Residues 85 to 102 (RSNENRQEGQEAIVVKEP) are compositionally biased toward basic and acidic residues. Thr-156 is subject to Phosphothreonine. Disordered stretches follow at residues 173–228 (FAQQ…PASE) and 245–277 (KEFS…TRIG). 2 stretches are compositionally biased toward basic and acidic residues: residues 178 to 205 (EAQE…KDDQ) and 212 to 222 (DSKEQISRVPE). Residues Ser-260 and Ser-263 each carry the phosphoserine modification. The 200-residue stretch at 324–523 (IPLTILLEQD…LLIRYQKILW (200 aa)) folds into the Rho-GAP domain. A Phosphoserine modification is found at Ser-610.

As to quaternary structure, interacts with MPHOSPH6. Widely expressed: expressed in most organs, except small intestine.

It is found in the cytoplasm. Rho GTPase activating protein that suppresses F-actin polymerization by inhibiting Rho. Rho GTPase activating proteins act by converting Rho-type GTPases to an inactive GDP-bound state. Plays a key role in tissue tension and 3D tissue shape by regulating cortical actomyosin network formation. Acts downstream of YAP1 and inhibits actin polymerization, which in turn reduces nuclear localization of YAP1. Regulates cell shape, spreading, and migration. This chain is Rho GTPase-activating protein 18, found in Mus musculus (Mouse).